The sequence spans 710 residues: MADAKYVLCRWEKRLWPAKVLARTATSTKNKRRKEYFLAVQILSLEEKIKVKSTEVEILEKSQIEAIASSLASQNEVPAAPLEELAYRRSLRVALDVLSEGSIWSQESSAGTGRADRSLRGKPMEHVSSPCDSNSSSLPRGDVLGSSRPHRRRPCVQQSLSSSFTCEKDPECKVDHKKGLRKSENPRGPLVLPAGGGAQDESGSRIHHKNWTLASKRGGNSAQKASLCLNGSSLSEDDTERDMGSKGGSWAAPSLPSGVREDDPCANAEGHDPGLPLGSLTAPPAPEPSACSEPGECPAKKRPRLDGSQRPPAVQLEPMAAGAAPSPGPGPGPRESVTPRSTARLGPPPSHASADATRCLPCPDSQKLEKECQSSEESMGSNSMRSILEEDEEDEEPPRVLLYHEPRSFEVGMLVWHKHKKYPFWPAVVKSVRQRDKKASVLYIEGHMNPKMKGFTVSLKSLKHFDCKEKQTLLNQAREDFNQDIGWCVSLITDYRVRLGCGSFAGSFLEYYAADISYPVRKSIQQDVLGTKLPQLSKGSPEEPVVGCPLGQRQPCRKMLPDRSRAARDRANQKLVEYIVKAKGAESHLRAILKSRKPSRWLQTFLSSSQYVTCVETYLEDEGQLDLVVKYLQGVYQEVGAKVLQRTNGDRIRFILDVLLPEAIICAISAVDEVDYKTAEEKYIKGPSLSYREKEIFDNQLLEERNRRRR.

Residues 106 to 160 are disordered; the sequence is QESSAGTGRADRSLRGKPMEHVSSPCDSNSSSLPRGDVLGSSRPHRRRPCVQQSL. A compositionally biased stretch (basic and acidic residues) spans 114 to 125; the sequence is RADRSLRGKPME. Over residues 128-137 the composition is skewed to low complexity; that stretch reads SSPCDSNSSS. Ser-161 carries the phosphoserine modification. 2 disordered regions span residues 177-204 and 230-398; these read KKGL…ESGS and NGSS…EEPP. The span at 288 to 297 shows a compositional bias: low complexity; sequence PSACSEPGEC. Phosphoserine occurs at positions 374 and 375. The span at 375 to 385 shows a compositional bias: polar residues; it reads SEESMGSNSMR. The 62-residue stretch at 411–472 folds into the PWWP domain; it reads VGMLVWHKHK…KHFDCKEKQT (62 aa).

The protein belongs to the PWWP3A family. In terms of assembly, interacts with TP53BP1 (via BRCT domain); the interaction is not dependent on its phosphorylation status. Binds nucleosomes. Interacts with trimethylated 'Lys-36' of histone H3 (H3K36me3) (in vitro).

The protein localises to the nucleus. Functionally, involved in the DNA damage response pathway by contributing to the maintenance of chromatin architecture. Recruited to the vicinity of DNA breaks by TP53BP1 and plays an accessory role to facilitate damage-induced chromatin changes and promoting chromatin relaxation. Required for efficient DNA repair and cell survival following DNA damage. This is PWWP domain-containing DNA repair factor 3A from Homo sapiens (Human).